Here is a 406-residue protein sequence, read N- to C-terminus: CinA-like protein (406 aa).

Belongs to the CinA family.

The protein is CinA-like protein of Deinococcus geothermalis (strain DSM 11300 / CIP 105573 / AG-3a).